A 380-amino-acid chain; its full sequence is Cytochrome b (380 aa).

The next 4 membrane-spanning stretches (helical) occupy residues 34–54, 78–99, 114–134, and 179–199; these read FGSLLGICLLTQIMTGLLLAT, WLIRNLHANGASFFFICIYLHI, WNTGIILLLTLMATAFVGYVL, and FFALHFLLPFLIAGLTLIHLT. Histidine 84 and histidine 98 together coordinate heme b. Residues histidine 183 and histidine 197 each contribute to the heme b site. Histidine 202 is an a ubiquinone binding site. 4 helical membrane-spanning segments follow: residues 227-247, 289-309, 321-341, and 348-368; these read LKDILGFMLMLLPLTTLALFS, LGGVLALAASVLILFLIPFLH, ISQLLFWTLVANLLILTWIGS, and FIIIGQLASLTYFLILLALFP.

This sequence belongs to the cytochrome b family. The cytochrome bc1 complex contains 11 subunits: 3 respiratory subunits (MT-CYB, CYC1 and UQCRFS1), 2 core proteins (UQCRC1 and UQCRC2) and 6 low-molecular weight proteins (UQCRH/QCR6, UQCRB/QCR7, UQCRQ/QCR8, UQCR10/QCR9, UQCR11/QCR10 and a cleavage product of UQCRFS1). This cytochrome bc1 complex then forms a dimer. Requires heme b as cofactor.

The protein localises to the mitochondrion inner membrane. Functionally, component of the ubiquinol-cytochrome c reductase complex (complex III or cytochrome b-c1 complex) that is part of the mitochondrial respiratory chain. The b-c1 complex mediates electron transfer from ubiquinol to cytochrome c. Contributes to the generation of a proton gradient across the mitochondrial membrane that is then used for ATP synthesis. This chain is Cytochrome b (MT-CYB), found in Buteo buteo (Eurasian buzzard).